Reading from the N-terminus, the 135-residue chain is Large ribosomal subunit protein uL16c (135 aa).

It belongs to the universal ribosomal protein uL16 family. Part of the 50S ribosomal subunit.

It is found in the plastid. The protein resides in the chloroplast. This Aethionema cordifolium (Lebanon stonecress) protein is Large ribosomal subunit protein uL16c.